Reading from the N-terminus, the 449-residue chain is GTPase Der (449 aa).

2 consecutive EngA-type G domains span residues 4-174 (PIVA…PPKT) and 183-358 (LRVA…AQRQ). Residues 10 to 17 (GRPNVGKS), 57 to 61 (DTAGL), 126 to 129 (NKCD), 189 to 196 (GRPNVGKS), 236 to 240 (DTAGI), and 301 to 304 (NKWD) contribute to the GTP site. A KH-like domain is found at 359–444 (KRIPTSELNN…PIVIVFRSRE (86 aa)).

This sequence belongs to the TRAFAC class TrmE-Era-EngA-EngB-Septin-like GTPase superfamily. EngA (Der) GTPase family. Associates with the 50S ribosomal subunit.

In terms of biological role, GTPase that plays an essential role in the late steps of ribosome biogenesis. This chain is GTPase Der, found in Chloroflexus aggregans (strain MD-66 / DSM 9485).